A 217-amino-acid polypeptide reads, in one-letter code: Dephospho-CoA kinase (217 aa).

The 200-residue stretch at Ile-4–Asn-203 folds into the DPCK domain. Residue Ser-12–Thr-17 participates in ATP binding.

The protein belongs to the CoaE family.

It is found in the cytoplasm. The enzyme catalyses 3'-dephospho-CoA + ATP = ADP + CoA + H(+). Its pathway is cofactor biosynthesis; coenzyme A biosynthesis; CoA from (R)-pantothenate: step 5/5. Catalyzes the phosphorylation of the 3'-hydroxyl group of dephosphocoenzyme A to form coenzyme A. This is Dephospho-CoA kinase from Buchnera aphidicola subsp. Acyrthosiphon pisum (strain APS) (Acyrthosiphon pisum symbiotic bacterium).